Here is a 285-residue protein sequence, read N- to C-terminus: UPF0354 protein SA1564 (285 aa).

It belongs to the UPF0354 family.

The polypeptide is UPF0354 protein SA1564 (Staphylococcus aureus (strain N315)).